A 399-amino-acid chain; its full sequence is Phosphoglycerate kinase (399 aa).

Substrate contacts are provided by residues 22-24 (DFN), Arg38, 61-64 (HLGR), Arg120, and Arg153. ATP-binding positions include Lys204, Glu326, and 353–356 (GGDT).

It belongs to the phosphoglycerate kinase family. As to quaternary structure, monomer.

It localises to the cytoplasm. It catalyses the reaction (2R)-3-phosphoglycerate + ATP = (2R)-3-phospho-glyceroyl phosphate + ADP. It participates in carbohydrate degradation; glycolysis; pyruvate from D-glyceraldehyde 3-phosphate: step 2/5. In Geotalea daltonii (strain DSM 22248 / JCM 15807 / FRC-32) (Geobacter daltonii), this protein is Phosphoglycerate kinase.